We begin with the raw amino-acid sequence, 471 residues long: Putative multidrug resistance protein MdtD (471 aa).

The Periplasmic portion of the chain corresponds to 1-11 (MTDLPDSTRWQ). Residues 12-32 (LWIVAFGFFMQSLDTTIVNTA) form a helical membrane-spanning segment. Residues 33-48 (LPSMAQSLGESPLHMH) are Cytoplasmic-facing. The helical transmembrane segment at 49-69 (MVIVSYVLTVAVMLPASGWLA) threads the bilayer. At 70–76 (DKVGVRN) the chain is on the periplasmic side. Residues 77–97 (IFFTAIVLFTLGSLFCALSGT) form a helical membrane-spanning segment. The Cytoplasmic portion of the chain corresponds to 98-101 (LNEL). Residues 102 to 124 (LLARALQGVGGAMMVPVGRLTVM) form a helical membrane-spanning segment. Residues 125–137 (KIVPREQYMAAMT) are Periplasmic-facing. A helical transmembrane segment spans residues 138 to 158 (FVTLPGQIGPLLGPALGGLLV). Residues 159 to 164 (EYASWH) lie on the Cytoplasmic side of the membrane. A helical transmembrane segment spans residues 165-185 (WIFLINIPVGIIGAITTLMLM). Over 186 to 196 (PNYTMQTRRFD) the chain is Periplasmic. The helical transmembrane segment at 197–217 (LSGFLLLAVGMAVLTLALDGS) threads the bilayer. Residues 218–224 (KGTGFSP) lie on the Cytoplasmic side of the membrane. A helical membrane pass occupies residues 225–245 (LAIAGLVAVGVVALVLYLLHA). Topologically, residues 246 to 262 (QNNNRALFSLKLFRTRT) are periplasmic. Residues 263-283 (FSLGLAGSFAGRIGSGMLPFM) traverse the membrane as a helical segment. The Cytoplasmic portion of the chain corresponds to 284 to 285 (TP). A helical transmembrane segment spans residues 286-306 (VFLQIGFGFSPFHAGLMMIPM). Residues 307-341 (VLGSMGMKRIVVQVVNRFGYRRVLVATTLGLSLVT) are Periplasmic-facing. A helical membrane pass occupies residues 342–362 (LLFMTTALLGWYYVLPFVLFL). Residues 363–395 (QGMVNSTRFSSMNTLTLKDLPDNLASSGNSLLS) are Cytoplasmic-facing. A helical transmembrane segment spans residues 396 to 416 (MIMQLSMSIGVTIAGLLLGLF). At 417–430 (GSQHVSVDSGTTQT) the chain is on the periplasmic side. A helical membrane pass occupies residues 431–451 (VFMYTWLSMASIIALPAFIFA). Residues 452–471 (RVPNDTHQNVAISRRKRSAQ) are Cytoplasmic-facing.

Belongs to the major facilitator superfamily. TCR/Tet family.

It is found in the cell inner membrane. The sequence is that of Putative multidrug resistance protein MdtD from Escherichia coli O6:H1 (strain CFT073 / ATCC 700928 / UPEC).